Here is a 500-residue protein sequence, read N- to C-terminus: 7-alpha-hydroxycholest-4-en-3-one 12-alpha-hydroxylase (500 aa).

The helical transmembrane segment at 4–24 threads the bilayer; sequence WCTVLGALLTVVGCLCLSLLL. S325 bears the Phosphoserine mark. C439 is a binding site for heme.

This sequence belongs to the cytochrome P450 family. Heme is required as a cofactor. In terms of tissue distribution, expressed in liver.

The protein localises to the endoplasmic reticulum membrane. It is found in the microsome membrane. The enzyme catalyses 7alpha-hydroxycholest-4-en-3-one + reduced [NADPH--hemoprotein reductase] + O2 = 7alpha,12alpha-dihydroxycholest-4-en-3-one + oxidized [NADPH--hemoprotein reductase] + H2O + H(+). It catalyses the reaction 5beta-cholestane-3alpha,7alpha-diol + reduced [NADPH--hemoprotein reductase] + O2 = 5beta-cholestane-3alpha,7alpha,12alpha-triol + oxidized [NADPH--hemoprotein reductase] + H2O + H(+). It carries out the reaction chenodeoxycholate + reduced [NADPH--hemoprotein reductase] + O2 = cholate + oxidized [NADPH--hemoprotein reductase] + H2O + H(+). Its pathway is lipid metabolism; bile acid biosynthesis. A cytochrome P450 monooxygenase involved in primary bile acid biosynthesis. Catalyzes the 12alpha-hydroxylation of 7alpha-hydroxy-4-cholesten-3-one, an intermediate metabolite in cholic acid biosynthesis. Controls biliary balance of cholic acid and chenodeoxycholic acid, ultimately regulating the intestinal absorption of dietary lipids. Mechanistically, uses molecular oxygen inserting one oxygen atom into a substrate, and reducing the second into a water molecule, with two electrons provided by NADPH via cytochrome P450 reductase (CPR; NADPH--hemoprotein reductase). This is 7-alpha-hydroxycholest-4-en-3-one 12-alpha-hydroxylase (Cyp8b1) from Mus musculus (Mouse).